The sequence spans 292 residues: Acetylglutamate kinase (292 aa).

Residues 64-65 (GG), arginine 86, and asparagine 190 contribute to the substrate site.

It belongs to the acetylglutamate kinase family. ArgB subfamily.

It is found in the cytoplasm. It carries out the reaction N-acetyl-L-glutamate + ATP = N-acetyl-L-glutamyl 5-phosphate + ADP. It functions in the pathway amino-acid biosynthesis; L-arginine biosynthesis; N(2)-acetyl-L-ornithine from L-glutamate: step 2/4. Its function is as follows. Catalyzes the ATP-dependent phosphorylation of N-acetyl-L-glutamate. This chain is Acetylglutamate kinase, found in Geotalea daltonii (strain DSM 22248 / JCM 15807 / FRC-32) (Geobacter daltonii).